A 351-amino-acid polypeptide reads, in one-letter code: Photosystem II D2 protein (351 aa).

A helical membrane pass occupies residues 39 to 59; it reads TAYLSIGGWLTGTTFVTSWYT. Histidine 116 is a binding site for chlorophyll a. The chain crosses the membrane as a helical span at residues 123 to 139; sequence GFMLRQFEIARLVGIRP. Residues glutamine 128 and asparagine 141 each contribute to the pheophytin a site. A helical membrane pass occupies residues 151–164; that stretch reads VFVSVFLMYPLGQS. Histidine 196 lines the chlorophyll a pocket. Residues 206 to 226 traverse the membrane as a helical segment; sequence GALLCAIHGATVENTLFEDGE. Residues histidine 213 and phenylalanine 260 each coordinate a plastoquinone. Histidine 213 contributes to the Fe cation binding site. Residue histidine 267 participates in Fe cation binding. A helical transmembrane segment spans residues 277–293; sequence GLWTSAIGIIGLALNLR.

This sequence belongs to the reaction center PufL/M/PsbA/D family. As to quaternary structure, PSII is composed of 1 copy each of membrane proteins PsbA, PsbB, PsbC, PsbD, PsbE, PsbF, PsbH, PsbI, PsbJ, PsbK, PsbL, PsbM, PsbT, PsbX, PsbY, PsbZ, Psb30/Ycf12, peripheral proteins PsbO, CyanoQ (PsbQ), PsbU, PsbV and a large number of cofactors. It forms dimeric complexes. The cofactor is The D1/D2 heterodimer binds P680, chlorophylls that are the primary electron donor of PSII, and subsequent electron acceptors. It shares a non-heme iron and each subunit binds pheophytin, quinone, additional chlorophylls, carotenoids and lipids. There is also a Cl(-1) ion associated with D1 and D2, which is required for oxygen evolution. The PSII complex binds additional chlorophylls, carotenoids and specific lipids..

It localises to the cellular thylakoid membrane. It carries out the reaction 2 a plastoquinone + 4 hnu + 2 H2O = 2 a plastoquinol + O2. Photosystem II (PSII) is a light-driven water:plastoquinone oxidoreductase that uses light energy to abstract electrons from H(2)O, generating O(2) and a proton gradient subsequently used for ATP formation. It consists of a core antenna complex that captures photons, and an electron transfer chain that converts photonic excitation into a charge separation. The D1/D2 (PsbA/PsbD) reaction center heterodimer binds P680, the primary electron donor of PSII as well as several subsequent electron acceptors. D2 is needed for assembly of a stable PSII complex. This chain is Photosystem II D2 protein, found in Synechococcus sp. (strain CC9311).